The primary structure comprises 225 residues: MKHVLKNDWGPLLAPEFEKEYYRELDVFLKEEYSIHVVYPKVEEIFNALEYTSYENTKVVILGQDPYHGPNQAHGLSFSVQPGVKTPPSLLNMYKELRDEYGYDIPNNGYLVKWAEQGVLLLNTVLTVRQGEANSHKGKGWEHFTDRVIELLNEREKPVIFILWGRHAQAKKKLITNSNHHIIESVHPSPLSARRGFFGSKPYSKVNTILANMGEREIDWEIPNL.

The active-site Proton acceptor is the Asp65.

It belongs to the uracil-DNA glycosylase (UDG) superfamily. UNG family.

It localises to the cytoplasm. It carries out the reaction Hydrolyzes single-stranded DNA or mismatched double-stranded DNA and polynucleotides, releasing free uracil.. Its function is as follows. Excises uracil residues from the DNA which can arise as a result of misincorporation of dUMP residues by DNA polymerase or due to deamination of cytosine. The sequence is that of Uracil-DNA glycosylase from Bacillus cereus (strain AH820).